Reading from the N-terminus, the 551-residue chain is Hydroxylamine reductase (551 aa).

Positions 3, 6, 18, and 25 each coordinate [2Fe-2S] cluster. Hybrid [4Fe-2O-2S] cluster contacts are provided by His249, Glu273, Cys317, Cys405, Cys433, Cys459, Glu493, and Lys495. Residue Cys405 is modified to Cysteine persulfide.

Belongs to the HCP family. [2Fe-2S] cluster serves as cofactor. The cofactor is hybrid [4Fe-2O-2S] cluster.

Its subcellular location is the cytoplasm. The catalysed reaction is A + NH4(+) + H2O = hydroxylamine + AH2 + H(+). Catalyzes the reduction of hydroxylamine to form NH(3) and H(2)O. This chain is Hydroxylamine reductase, found in Actinobacillus pleuropneumoniae serotype 7 (strain AP76).